A 1055-amino-acid polypeptide reads, in one-letter code: MSGSYPFIDIAALDSIREGFAKGDAQLVLTHDLSAVLWVNGPGAKLFGFDRVEDMIGGGLDLPIATRRQIASSNSNAEGETRTVSVRLGGGLRSDLTRFSVSHITLPDGVSGLLLTADGKDAEAEDIISGLSDDSTHIALIDANSRVIAASPRFAALDISSTTLEDLVIEAADATDRIVKRRIRAGKHSVPGAIARLTDTPPMHLLCIIGDAPVATLEAPAALQGEAEEILEEILPEPVESANTEDASTDQQKPRSFVFEQDAPPARFIWKVGPDGTFSEISPDLAATIGPNAADVVGRRFADVANVFGFDPDGSIAALLDKRDTWSGKRLMWPVEGTDLRVPVELAALPVYSRDREFTGFRGFGLVRPAEAEKDPEEIGLVLAGGIPQARKPVSEPVETATPVEDDDVLALGEEVANDDSPVATLPKPPLDIAPTPGRRESDKVISLLNACAEEKVAADQARMLKEREREERPEGGLTKTERNAFREIADRLRKQGLANSRAETETVAISDEPVIDSSQPVEKTEVKASLIDEVTADEASLPSSGMAYGDETALLANLPVPVIIHSGDKIHYVNQALLDLTGYESLDDIRGAGGVDVLFNSESDDGETRQGMVLRRANGSEEPVDAHLNAISWREGRALMLSLMPVAAAPVSVEAVAAPAEAPVAIDKDDEKQALADHVEELKTILDTATDGVVLIDPEGRIRSMNHSASALFGYERDETEGKFFSMLFAIESQRAAMDYLHGLSGNGVLSVLNDGREVIGREAKGGFIPLFMTIGKLPHTRGFCAVLRDITQWKRTEEELTNARKEAERASSQKTEFLARISHEIRTPLNAIIGFSELMADEKFGSIGNDRYRDYLRDINRSGNHVLALVNDLLDISKIEAGALDMQFEAVSLNDAIAEAIALMQPQANRERVIIRSSFQSNLPDIVADTRSIKQVALNLLSNAVRFTAPGGQVIVSTSYEMNGDVVMRVRDTGIGMTKSEVEQALKPFRQVNALERRKAETAKDWRSEGTGLGLPLTKAMVEANRAQFAIDSTPGHGTVVEIAFPPTRVLAD.

Residues 1-626 (MSGSYPFIDI…RANGSEEPVD (626 aa)) are important for polar localization. The segment at 419–439 (DDSPVATLPKPPLDIAPTPGR) is disordered. Residues 627 to 1055 (AHLNAISWRE…AFPPTRVLAD (429 aa)) are interaction with DivK. A PAS domain is found at 679–750 (HVEELKTILD…YLHGLSGNGV (72 aa)). Positions 822–1051 (RISHEIRTPL…VVEIAFPPTR (230 aa)) constitute a Histidine kinase domain. At H825 the chain carries Phosphohistidine; by autocatalysis.

Interacts with DivK.

The protein localises to the cytoplasm. It catalyses the reaction ATP + protein L-histidine = ADP + protein N-phospho-L-histidine.. Functionally, functions as a polar differentiation marker. Essential protein that, by localizing in the old pole of dividing cells, controls cell division and maturation, probably through control of DivK phosphorylation status and cellular distribution, which in turn regulates CtrA, a transcriptional regulator of the minB operon. The asymmetrical localization of this protein is probably required for cells to enter a new division cycle. The sequence is that of Cell-division control histidine kinase PdhS (pdhS) from Brucella anthropi (strain ATCC 49188 / DSM 6882 / CCUG 24695 / JCM 21032 / LMG 3331 / NBRC 15819 / NCTC 12168 / Alc 37) (Ochrobactrum anthropi).